We begin with the raw amino-acid sequence, 420 residues long: MSWRDLPRLRLWLKTEAIPGEGRKAAKVNAGVGEKGIYTASSRGGPPSARSKAVAVVAQGAASRSRLSMDAPELGPGLVERLEQLATCPLCGGSFEDPVLLACEHSFCRACLARRWGTPPATDTEASPTACPCCGLPCPRRSLRSNVRLAVEVRISRELREKLAEPGARAGRRRGGRIPTMGCLDPPGEDMRKTWRRFEVPTPKSSKSEDDLPEDYPVVKNMLHRLTADLTLDPGTAHRRLLISADRRSVQLAPPGTPAPPDGPKRFDQLPAVLGAQGFGAGRHCWEVETADAASCRDSSGEDEDDEESHYAVGAAGESVQRKGCVRLCPAGAVWAVEGRGGRLWALTAPEPTLLGGAEPPPRRIRVDLDWERGRVAFYDGRSLDLLYAFQASVPLGERIFPLFCTCDPRAPLRIVPAES.

The RING-type zinc finger occupies 88–135 (CPLCGGSFEDPVLLACEHSFCRACLARRWGTPPATDTEASPTACPCCG). Disordered regions lie at residues 166–186 (PGARAGRRRGGRIPTMGCLDP) and 246–265 (DRRSVQLAPPGTPAPPDGPK). Residues 210–420 (DDLPEDYPVV…APLRIVPAES (211 aa)) enclose the B30.2/SPRY domain.

Its subcellular location is the cytoplasm. It carries out the reaction S-ubiquitinyl-[E2 ubiquitin-conjugating enzyme]-L-cysteine + [acceptor protein]-L-lysine = [E2 ubiquitin-conjugating enzyme]-L-cysteine + N(6)-ubiquitinyl-[acceptor protein]-L-lysine.. It participates in protein modification; protein ubiquitination. Its function is as follows. Plays an inhibitory role in anti-RNA viral innate immunity by targeting the adapter DDX3X and promoting its 'Lys-48'-linked polyubiquitination. Alternatively, enhances the cGAS-STING pathway activation by promoting 'Lys-63'-linked ubiquitination of STING1, facilitating the STING1-TBK1 complex formation and STING1 activation. The chain is RING finger protein 39 (RNF39) from Macaca mulatta (Rhesus macaque).